The sequence spans 290 residues: HTH-type transcriptional regulator BsdA (290 aa).

Residues 1–59 (MDIRQLRYFITIAQEQKITSAAKKLHMAQPPLSRQLKQLEDELGVVLFDRNKKKQMTLT) enclose the HTH lysR-type domain. Positions 18–37 (ITSAAKKLHMAQPPLSRQLK) form a DNA-binding region, H-T-H motif.

This sequence belongs to the LysR transcriptional regulatory family.

Its function is as follows. Could be a positive regulator of bsdBCD expression in response to salicylic acid. This Bacillus subtilis (strain 168) protein is HTH-type transcriptional regulator BsdA (bsdA).